We begin with the raw amino-acid sequence, 152 residues long: MTEYKKVIAQNNKAIFNYFIEERLEAGIVLNGSEVQSLRQGKASIEESHAADTGHEVFLYNCHIAEYEKANRFNHSTRRPRKLLLHTKEIKKIIGRIRIKGYTLVALSMYFNKQNKVKVELGIAKGKKLHDKRESIKEKDWKRDQSRLIRQK.

Belongs to the SmpB family.

It is found in the cytoplasm. Functionally, required for rescue of stalled ribosomes mediated by trans-translation. Binds to transfer-messenger RNA (tmRNA), required for stable association of tmRNA with ribosomes. tmRNA and SmpB together mimic tRNA shape, replacing the anticodon stem-loop with SmpB. tmRNA is encoded by the ssrA gene; the 2 termini fold to resemble tRNA(Ala) and it encodes a 'tag peptide', a short internal open reading frame. During trans-translation Ala-aminoacylated tmRNA acts like a tRNA, entering the A-site of stalled ribosomes, displacing the stalled mRNA. The ribosome then switches to translate the ORF on the tmRNA; the nascent peptide is terminated with the 'tag peptide' encoded by the tmRNA and targeted for degradation. The ribosome is freed to recommence translation, which seems to be the essential function of trans-translation. This chain is SsrA-binding protein, found in Rickettsia akari (strain Hartford).